We begin with the raw amino-acid sequence, 496 residues long: Probable cytosol aminopeptidase (496 aa).

The Mn(2+) site is built by K252 and D257. The active site involves K264. Positions 275, 334, and 336 each coordinate Mn(2+). Residue R338 is part of the active site.

It belongs to the peptidase M17 family. The cofactor is Mn(2+).

Its subcellular location is the cytoplasm. It carries out the reaction Release of an N-terminal amino acid, Xaa-|-Yaa-, in which Xaa is preferably Leu, but may be other amino acids including Pro although not Arg or Lys, and Yaa may be Pro. Amino acid amides and methyl esters are also readily hydrolyzed, but rates on arylamides are exceedingly low.. It catalyses the reaction Release of an N-terminal amino acid, preferentially leucine, but not glutamic or aspartic acids.. Presumably involved in the processing and regular turnover of intracellular proteins. Catalyzes the removal of unsubstituted N-terminal amino acids from various peptides. This is Probable cytosol aminopeptidase from Leifsonia xyli subsp. xyli (strain CTCB07).